We begin with the raw amino-acid sequence, 459 residues long: N,N-dimethyl phenylurea N-demethylase subunit alpha (459 aa).

The region spanning 55-166 is the Rieske domain; the sequence is WVFVAHETEI…VESYHGFIFT (112 aa). Positions 97, 99, 117, and 120 each coordinate [2Fe-2S] cluster. Fe cation-binding residues include histidine 225, histidine 230, and aspartate 386.

It belongs to the bacterial ring-hydroxylating dioxygenase alpha subunit family. In terms of assembly, pdmA (subunit alpha) and PdmB (subunit beta) form the oxygenase component of a bacterial Rieske non-heme iron oxygenase (RO) system. [2Fe-2S] cluster serves as cofactor. The cofactor is Fe cation.

It carries out the reaction a 1,1-dimethyl-3-phenylurea + 2 reduced [2Fe-2S]-[ferredoxin] + O2 + 2 H(+) = a 1-methyl-3-phenylurea + formaldehyde + 2 oxidized [2Fe-2S]-[ferredoxin] + H2O. The catalysed reaction is isoproturon + 2 reduced [2Fe-2S]-[ferredoxin] + O2 + 2 H(+) = 1-methyl-3-[4-(propan-2-yl)phenyl]urea + formaldehyde + 2 oxidized [2Fe-2S]-[ferredoxin] + H2O. The enzyme catalyses chlorotoluron + 2 reduced [2Fe-2S]-[ferredoxin] + O2 + 2 H(+) = 3-(3-chloro-4-methylphenyl)-1-methylurea + formaldehyde + 2 oxidized [2Fe-2S]-[ferredoxin] + H2O. It catalyses the reaction metoxuron + 2 reduced [2Fe-2S]-[ferredoxin] + O2 + 2 H(+) = 3-(3-chloro-4-methoxylphenyl)-1-methylurea + formaldehyde + 2 oxidized [2Fe-2S]-[ferredoxin] + H2O. It carries out the reaction monuron + 2 reduced [2Fe-2S]-[ferredoxin] + O2 + 2 H(+) = 3-(4-chlorophenyl)-1-methylurea + formaldehyde + 2 oxidized [2Fe-2S]-[ferredoxin] + H2O. The catalysed reaction is diuron + 2 reduced [2Fe-2S]-[ferredoxin] + O2 + 2 H(+) = 3-(3,4-dichlorophenyl)-1-methylurea + formaldehyde + 2 oxidized [2Fe-2S]-[ferredoxin] + H2O. The enzyme catalyses fluometuron + 2 reduced [2Fe-2S]-[ferredoxin] + O2 + 2 H(+) = 3-[3-(trifluoromethyl)phenyl]-1-methylurea + formaldehyde + 2 oxidized [2Fe-2S]-[ferredoxin] + H2O. It catalyses the reaction fenuron + 2 reduced [2Fe-2S]-[ferredoxin] + O2 + 2 H(+) = 1-methyl-3-phenylurea + formaldehyde + 2 oxidized [2Fe-2S]-[ferredoxin] + H2O. The protein operates within xenobiotic degradation. Activity is stimulated in vitro by coexpression of a [3Fe-4S]-type ferredoxin. Functionally, part of the multicomponent N,N-dimethyl phenylurea N-demethylase responsible for the initial N-demethylation step during the bacterial metabolism of N,N-dimethyl-substituted phenylurea herbicides. Catalyzes the mono-N-demethylation of N,N-dimethyl-substituted phenylurea herbicides to their mono-N-demethylated derivatives. Is active on isoproturon (IPU), chlorotoluron, metoxuron, monoron, diuron, fluometuron and fenuron, but cannot transform the N-methoxy-N-methyl-substituted herbicides. The chain is N,N-dimethyl phenylurea N-demethylase subunit alpha from Sphingobium sp. (strain YBL2).